We begin with the raw amino-acid sequence, 76 residues long: Translational regulator CsrA (76 aa).

Belongs to the CsrA/RsmA family. In terms of assembly, homodimer; the beta-strands of each monomer intercalate to form a hydrophobic core, while the alpha-helices form wings that extend away from the core.

Its subcellular location is the cytoplasm. A translational regulator that binds mRNA to regulate translation initiation and/or mRNA stability. Usually binds in the 5'-UTR at or near the Shine-Dalgarno sequence preventing ribosome-binding, thus repressing translation. Its main target seems to be the major flagellin gene, while its function is anatagonized by FliW. The protein is Translational regulator CsrA of Helicobacter pylori (strain P12).